The following is a 449-amino-acid chain: MSPQTETKASVGFKAGVKDYKLTYYTPDYETKDTDILAAFRVTPQPGVPPEEAGAAVAAESSTGTWTTVWTDGLTSLDRYKGRCYGLEPVAGEENQYIAYVAYPLDLFEEGSVTNMFTSIVGNVFGFKALRALRLEDLRIPPAYSKTFQGPPHGIQVERDKLNKYGRPLLGCTIKPKLGLSAKNYGRAVYECLRGGLDFTKDDENVNSQPFMRWRDRFLFCAEALYKAVAETGEIKGHYLNATAGTCEEMIKRAVFARELGVPIVMHDYLTGGFTANTSLAHYCRDNGLLLHIHXXXXXXXXXXKNHGMHFRVLAKALRMSGGDHVHAGTVVGKLEGERDITLGFVDLLRDDFIEKDRSRGIYFTQDWVSLPGVLPVASGGIHVWHMPALTEIFGDDSVLQFGGGTLGHPWGNAPGAVANRVAVEACVQARNEGRDLAREGNXIIREAS.

A propeptide spanning residues 1–2 (MS) is cleaved from the precursor. Proline 3 is subject to N-acetylproline. Lysine 14 carries the post-translational modification N6,N6,N6-trimethyllysine. Substrate-binding residues include asparagine 123 and threonine 173. Residue lysine 175 is the Proton acceptor of the active site. Lysine 177 serves as a coordination point for substrate. Residues lysine 201, aspartate 203, and glutamate 204 each contribute to the Mg(2+) site. At lysine 201 the chain carries N6-carboxylysine. Histidine 294 (proton acceptor) is an active-site residue. Residues residue 295, histidine 327, and serine 379 each contribute to the substrate site.

This sequence belongs to the RuBisCO large chain family. Type I subfamily. Heterohexadecamer of 8 large chains and 8 small chains; disulfide-linked. The disulfide link is formed within the large subunit homodimers. It depends on Mg(2+) as a cofactor. Post-translationally, the disulfide bond which can form in the large chain dimeric partners within the hexadecamer appears to be associated with oxidative stress and protein turnover.

The protein resides in the plastid. It localises to the chloroplast. It carries out the reaction 2 (2R)-3-phosphoglycerate + 2 H(+) = D-ribulose 1,5-bisphosphate + CO2 + H2O. It catalyses the reaction D-ribulose 1,5-bisphosphate + O2 = 2-phosphoglycolate + (2R)-3-phosphoglycerate + 2 H(+). RuBisCO catalyzes two reactions: the carboxylation of D-ribulose 1,5-bisphosphate, the primary event in carbon dioxide fixation, as well as the oxidative fragmentation of the pentose substrate in the photorespiration process. Both reactions occur simultaneously and in competition at the same active site. This Salacia pallescens protein is Ribulose bisphosphate carboxylase large chain.